A 640-amino-acid chain; its full sequence is Rab proteins geranylgeranyltransferase component A (640 aa).

2 disordered regions span residues 414 to 439 (DILG…NNNN) and 594 to 640 (HNEN…EMEL). A compositionally biased stretch (low complexity) spans 419–439 (NNNNNNNNNNNNNNNNNNNNN). The span at 604-624 (IDSDEDEDEDINDMNDNEEED) shows a compositional bias: acidic residues.

This sequence belongs to the Rab GDI family.

Substrate-binding subunit (component A) of the Rab geranylgeranyltransferase (GGTase) complex. Binds unprenylated Rab proteins and presents the substrate peptide to the catalytic component B. The component A is thought to be regenerated by transferring its prenylated Rab back to the donor membrane. The protein is Rab proteins geranylgeranyltransferase component A (MRS6) of Candida albicans (Yeast).